The following is a 143-amino-acid chain: Nucleoside diphosphate kinase (143 aa).

Residues K11, F59, R87, T93, R104, and N114 each coordinate ATP. H117 functions as the Pros-phosphohistidine intermediate in the catalytic mechanism.

Belongs to the NDK family. Homotetramer. Mg(2+) serves as cofactor.

The protein resides in the cytoplasm. It carries out the reaction a 2'-deoxyribonucleoside 5'-diphosphate + ATP = a 2'-deoxyribonucleoside 5'-triphosphate + ADP. The catalysed reaction is a ribonucleoside 5'-diphosphate + ATP = a ribonucleoside 5'-triphosphate + ADP. Major role in the synthesis of nucleoside triphosphates other than ATP. The ATP gamma phosphate is transferred to the NDP beta phosphate via a ping-pong mechanism, using a phosphorylated active-site intermediate. In Pseudomonas aeruginosa (strain UCBPP-PA14), this protein is Nucleoside diphosphate kinase.